A 473-amino-acid polypeptide reads, in one-letter code: tRNA-2-methylthio-N(6)-dimethylallyladenosine synthase (473 aa).

Positions Arg-5–Arg-125 constitute an MTTase N-terminal domain. 6 residues coordinate [4Fe-4S] cluster: Cys-14, Cys-50, Cys-88, Cys-166, Cys-170, and Cys-173. The Radical SAM core domain occupies Arg-152 to Ala-384. The region spanning Ala-387–Ala-449 is the TRAM domain. The interval Gln-452–Ala-473 is disordered.

The protein belongs to the methylthiotransferase family. MiaB subfamily. As to quaternary structure, monomer. It depends on [4Fe-4S] cluster as a cofactor.

The protein resides in the cytoplasm. It carries out the reaction N(6)-dimethylallyladenosine(37) in tRNA + (sulfur carrier)-SH + AH2 + 2 S-adenosyl-L-methionine = 2-methylsulfanyl-N(6)-dimethylallyladenosine(37) in tRNA + (sulfur carrier)-H + 5'-deoxyadenosine + L-methionine + A + S-adenosyl-L-homocysteine + 2 H(+). Catalyzes the methylthiolation of N6-(dimethylallyl)adenosine (i(6)A), leading to the formation of 2-methylthio-N6-(dimethylallyl)adenosine (ms(2)i(6)A) at position 37 in tRNAs that read codons beginning with uridine. The polypeptide is tRNA-2-methylthio-N(6)-dimethylallyladenosine synthase (Rhodopseudomonas palustris (strain BisB18)).